A 77-amino-acid polypeptide reads, in one-letter code: Apelin (77 aa).

An N-terminal signal peptide occupies residues 1 to 22 (MNLRRCVQALLLLWLCLSAVCG). Residues 23–41 (GPLLQTSDGKEMEEGTIRY) constitute a propeptide that is removed on maturation. The disordered stretch occupies residues 43 to 77 (VQPRGPRSGPGPWQGGRRKFRRQRPRLSHKGPMPF). A compositionally biased stretch (basic residues) spans 58 to 71 (GRRKFRRQRPRLSH). Pyrrolidone carboxylic acid is present on Q65.

The protein belongs to the apelin family. In terms of processing, at least 5 active peptides may be produced by proteolytic processing of the peptide precursor.

The protein resides in the secreted. It is found in the extracellular space. In terms of biological role, peptide hormone that functions as endogenous ligand for the G-protein-coupled apelin receptor (APLNR/APJ), that plays a role in cadiovascular homeostasis. Functions as a balanced agonist activating both G(i) protein pathway and beta-arrestin pathway of APLNR. Downstream G proteins activation, apelin can inhibit cAMP production and activate key intracellular effectors such as ERKs. On the other hand, APLNR activation induces beta-arrestin recruitment to the membrane leading to desensitization and internalization of the receptor. Apelin blunts cardiac hypertrophic induction from APLNR on response to pathological stimuli, but also induces myocardial hypertrophy under normal conditions. Apelin-36 dissociates more hardly than (pyroglu)apelin-13 from APLNR. Involved in the regulation of cardiac precursor cell movements during gastrulation and heart morphogenesis. Has an inhibitory effect on cytokine production in response to T-cell receptor/CD3 cross-linking; the oral intake of apelin in the colostrum and the milk might therefore modulate immune responses in neonates. Plays a role in early coronary blood vessels formation. Mediates myocardial contractility in an ERK1/2-dependent manner. May also have a role in the central control of body fluid homeostasis by influencing vasopressin release and drinking behavior. This chain is Apelin (APLN), found in Bos taurus (Bovine).